Consider the following 99-residue polypeptide: Large ribosomal subunit protein bL21 (99 aa).

The protein belongs to the bacterial ribosomal protein bL21 family. Part of the 50S ribosomal subunit. Contacts protein L20.

Its function is as follows. This protein binds to 23S rRNA in the presence of protein L20. The polypeptide is Large ribosomal subunit protein bL21 (Mycoplasmopsis agalactiae (strain NCTC 10123 / CIP 59.7 / PG2) (Mycoplasma agalactiae)).